Reading from the N-terminus, the 403-residue chain is Acetylornithine/succinyldiaminopimelate aminotransferase (403 aa).

Pyridoxal 5'-phosphate contacts are provided by residues 107–108 and Phe140; that span reads GA. Residue Arg143 participates in N(2)-acetyl-L-ornithine binding. 225–228 is a binding site for pyridoxal 5'-phosphate; it reads DEVQ. Residue Lys254 is modified to N6-(pyridoxal phosphate)lysine. Thr282 is a N(2)-acetyl-L-ornithine binding site. Thr283 contacts pyridoxal 5'-phosphate.

This sequence belongs to the class-III pyridoxal-phosphate-dependent aminotransferase family. ArgD subfamily. In terms of assembly, homodimer. Requires pyridoxal 5'-phosphate as cofactor.

It is found in the cytoplasm. The catalysed reaction is N(2)-acetyl-L-ornithine + 2-oxoglutarate = N-acetyl-L-glutamate 5-semialdehyde + L-glutamate. It carries out the reaction N-succinyl-(2S,6S)-2,6-diaminopimelate + 2-oxoglutarate = (S)-2-succinylamino-6-oxoheptanedioate + L-glutamate. Its pathway is amino-acid biosynthesis; L-arginine biosynthesis; N(2)-acetyl-L-ornithine from L-glutamate: step 4/4. It participates in amino-acid biosynthesis; L-lysine biosynthesis via DAP pathway; LL-2,6-diaminopimelate from (S)-tetrahydrodipicolinate (succinylase route): step 2/3. In terms of biological role, involved in both the arginine and lysine biosynthetic pathways. This is Acetylornithine/succinyldiaminopimelate aminotransferase from Photorhabdus laumondii subsp. laumondii (strain DSM 15139 / CIP 105565 / TT01) (Photorhabdus luminescens subsp. laumondii).